The chain runs to 82 residues: Omega-conotoxin-like 9 (82 aa).

The N-terminal stretch at 1–22 (MKLTCMMIAAVLFLTTWTFVTA) is a signal peptide. Positions 23 to 51 (DDSRYGLKNLFPKARHEMKNPEASKLNKR) are excised as a propeptide. Intrachain disulfides connect Cys54/Cys69, Cys61/Cys73, and Cys68/Cys77.

It belongs to the conotoxin O1 superfamily. Expressed by the venom duct.

The protein localises to the secreted. Omega-conotoxins act at presynaptic membranes, they bind and block voltage-gated calcium channels (Cav). The sequence is that of Omega-conotoxin-like 9 from Conus striatus (Striated cone).